Here is a 430-residue protein sequence, read N- to C-terminus: Probable histidine--tRNA ligase, cytoplasmic (430 aa).

Belongs to the class-II aminoacyl-tRNA synthetase family.

The protein resides in the cytoplasm. The enzyme catalyses tRNA(His) + L-histidine + ATP = L-histidyl-tRNA(His) + AMP + diphosphate + H(+). The polypeptide is Probable histidine--tRNA ligase, cytoplasmic (Vairimorpha ceranae (strain BRL01) (Microsporidian parasite)).